A 256-amino-acid polypeptide reads, in one-letter code: Hydroxyacylglutathione hydrolase (256 aa).

Zn(2+) contacts are provided by histidine 57, histidine 59, aspartate 61, histidine 62, histidine 115, aspartate 134, and histidine 172.

It belongs to the metallo-beta-lactamase superfamily. Glyoxalase II family. Monomer. It depends on Zn(2+) as a cofactor.

The catalysed reaction is an S-(2-hydroxyacyl)glutathione + H2O = a 2-hydroxy carboxylate + glutathione + H(+). The protein operates within secondary metabolite metabolism; methylglyoxal degradation; (R)-lactate from methylglyoxal: step 2/2. Functionally, thiolesterase that catalyzes the hydrolysis of S-D-lactoyl-glutathione to form glutathione and D-lactic acid. In Rhizobium johnstonii (strain DSM 114642 / LMG 32736 / 3841) (Rhizobium leguminosarum bv. viciae), this protein is Hydroxyacylglutathione hydrolase.